Reading from the N-terminus, the 118-residue chain is Small ribosomal subunit protein bS6 (118 aa).

The protein belongs to the bacterial ribosomal protein bS6 family.

In terms of biological role, binds together with bS18 to 16S ribosomal RNA. The polypeptide is Small ribosomal subunit protein bS6 (Parabacteroides distasonis (strain ATCC 8503 / DSM 20701 / CIP 104284 / JCM 5825 / NCTC 11152)).